The primary structure comprises 254 residues: Cytochrome c oxidase subunit 2 (254 aa).

Over 1 to 37 the chain is Mitochondrial intermembrane; that stretch reads MNNILNFYPAVITTDVAENWQIGFQDPATPIMEGIIN. Residues 38-58 form a helical membrane-spanning segment; it reads LHYDLMFFICVISVFVSWMLG. Residues 59–83 are Mitochondrial matrix-facing; the sequence is RTLWHFEQNQNKIPSSLTHGTLIEM. The chain crosses the membrane as a helical span at residues 84 to 104; it reads IWTVTPAFILLIIAVPSFSLL. The Mitochondrial intermembrane portion of the chain corresponds to 105–254; the sequence is YAMDEIISPA…VSWISNKLNE (150 aa). His186, Cys221, Glu223, Cys225, His229, and Met232 together coordinate Cu cation. A Mg(2+)-binding site is contributed by Glu223.

The protein belongs to the cytochrome c oxidase subunit 2 family. In terms of assembly, component of the cytochrome c oxidase (complex IV, CIV), a multisubunit enzyme composed of a catalytic core of 3 subunits and several supernumerary subunits. The complex exists as a monomer or a dimer and forms supercomplexes (SCs) in the inner mitochondrial membrane with ubiquinol-cytochrome c oxidoreductase (cytochrome b-c1 complex, complex III, CIII). Cu cation serves as cofactor.

Its subcellular location is the mitochondrion inner membrane. It carries out the reaction 4 Fe(II)-[cytochrome c] + O2 + 8 H(+)(in) = 4 Fe(III)-[cytochrome c] + 2 H2O + 4 H(+)(out). Its function is as follows. Component of the cytochrome c oxidase, the last enzyme in the mitochondrial electron transport chain which drives oxidative phosphorylation. The respiratory chain contains 3 multisubunit complexes succinate dehydrogenase (complex II, CII), ubiquinol-cytochrome c oxidoreductase (cytochrome b-c1 complex, complex III, CIII) and cytochrome c oxidase (complex IV, CIV), that cooperate to transfer electrons derived from NADH and succinate to molecular oxygen, creating an electrochemical gradient over the inner membrane that drives transmembrane transport and the ATP synthase. Cytochrome c oxidase is the component of the respiratory chain that catalyzes the reduction of oxygen to water. Electrons originating from reduced cytochrome c in the intermembrane space (IMS) are transferred via the dinuclear copper A center (CU(A)) of subunit 2 and heme A of subunit 1 to the active site in subunit 1, a binuclear center (BNC) formed by heme A3 and copper B (CU(B)). The BNC reduces molecular oxygen to 2 water molecules using 4 electrons from cytochrome c in the IMS and 4 protons from the mitochondrial matrix. The chain is Cytochrome c oxidase subunit 2 (COX2) from Chondrus crispus (Carrageen Irish moss).